A 252-amino-acid chain; its full sequence is Adenosylcobinamide-GDP ribazoletransferase (252 aa).

The next 5 membrane-spanning stretches (helical) occupy residues 33-53 (FISPLMVGIITGIIDWFVVLL), 105-125 (TGSGAIGLFLVYFSIFLIATL), 132-152 (LWFFLPSEVLARASAISLLGL), 184-204 (FAILFSSPVLILAYVILLLVF), and 215-235 (MSGDIVGAIITLSFPIYLLVA).

Belongs to the CobS family. It depends on Mg(2+) as a cofactor.

The protein localises to the cell membrane. It carries out the reaction alpha-ribazole + adenosylcob(III)inamide-GDP = adenosylcob(III)alamin + GMP + H(+). The catalysed reaction is alpha-ribazole 5'-phosphate + adenosylcob(III)inamide-GDP = adenosylcob(III)alamin 5'-phosphate + GMP + H(+). The protein operates within cofactor biosynthesis; adenosylcobalamin biosynthesis; adenosylcobalamin from cob(II)yrinate a,c-diamide: step 7/7. In terms of biological role, joins adenosylcobinamide-GDP and alpha-ribazole to generate adenosylcobalamin (Ado-cobalamin). Also synthesizes adenosylcobalamin 5'-phosphate from adenosylcobinamide-GDP and alpha-ribazole 5'-phosphate. In Sulfolobus acidocaldarius (strain ATCC 33909 / DSM 639 / JCM 8929 / NBRC 15157 / NCIMB 11770), this protein is Adenosylcobinamide-GDP ribazoletransferase.